Reading from the N-terminus, the 173-residue chain is RNA pyrophosphohydrolase (173 aa).

The region spanning 11–164 is the Nudix hydrolase domain; sequence PYRRCVGVVV…KKHVYRKVVS (154 aa). Residues 52-73 carry the Nudix box motif; that stretch reads GGIDEGEEPLDAACRELYEETG.

Belongs to the Nudix hydrolase family. RppH subfamily. The cofactor is a divalent metal cation.

Its function is as follows. Accelerates the degradation of transcripts by removing pyrophosphate from the 5'-end of triphosphorylated RNA, leading to a more labile monophosphorylated state that can stimulate subsequent ribonuclease cleavage. The sequence is that of RNA pyrophosphohydrolase from Bartonella quintana (strain Toulouse) (Rochalimaea quintana).